Here is a 209-residue protein sequence, read N- to C-terminus: Thiamine-phosphate synthase (209 aa).

4-amino-2-methyl-5-(diphosphooxymethyl)pyrimidine contacts are provided by residues 36 to 40 and N68; that span reads QYRDK. Positions 69 and 87 each coordinate Mg(2+). T106 serves as a coordination point for 4-amino-2-methyl-5-(diphosphooxymethyl)pyrimidine. Residue 133–135 coordinates 2-[(2R,5Z)-2-carboxy-4-methylthiazol-5(2H)-ylidene]ethyl phosphate; sequence SST. Residue K136 coordinates 4-amino-2-methyl-5-(diphosphooxymethyl)pyrimidine. Residue G163 participates in 2-[(2R,5Z)-2-carboxy-4-methylthiazol-5(2H)-ylidene]ethyl phosphate binding.

It belongs to the thiamine-phosphate synthase family. Mg(2+) serves as cofactor.

The enzyme catalyses 2-[(2R,5Z)-2-carboxy-4-methylthiazol-5(2H)-ylidene]ethyl phosphate + 4-amino-2-methyl-5-(diphosphooxymethyl)pyrimidine + 2 H(+) = thiamine phosphate + CO2 + diphosphate. It catalyses the reaction 2-(2-carboxy-4-methylthiazol-5-yl)ethyl phosphate + 4-amino-2-methyl-5-(diphosphooxymethyl)pyrimidine + 2 H(+) = thiamine phosphate + CO2 + diphosphate. The catalysed reaction is 4-methyl-5-(2-phosphooxyethyl)-thiazole + 4-amino-2-methyl-5-(diphosphooxymethyl)pyrimidine + H(+) = thiamine phosphate + diphosphate. It participates in cofactor biosynthesis; thiamine diphosphate biosynthesis; thiamine phosphate from 4-amino-2-methyl-5-diphosphomethylpyrimidine and 4-methyl-5-(2-phosphoethyl)-thiazole: step 1/1. In terms of biological role, condenses 4-methyl-5-(beta-hydroxyethyl)thiazole monophosphate (THZ-P) and 2-methyl-4-amino-5-hydroxymethyl pyrimidine pyrophosphate (HMP-PP) to form thiamine monophosphate (TMP). The sequence is that of Thiamine-phosphate synthase from Pseudomonas aeruginosa (strain UCBPP-PA14).